A 733-amino-acid chain; its full sequence is E3 ubiquitin-protein ligase COP1 (733 aa).

The disordered stretch occupies residues 1–43; the sequence is MSGSRQAGSGSAGTSPGSSAASSVTSASSSLSSSPSPPSVAAS. The Nuclear localization signal 1 signature appears at 111–115; the sequence is SSRKR. The RING-type zinc finger occupies 138 to 176; that stretch reads CPICFDMIEEAYMTKCGHSFCYKCIHQSLEDNNRCPKCN. Residues 197–208 carry the Nuclear localization signal 2 motif; the sequence is KQKQRFEEKRFK. Positions 231 to 306 form a coiled coil; sequence DQDNLDLANV…RVEEMSGLYS (76 aa). A Nuclear export signal motif is present at residues 237-247; it reads LANVNLMLELL. Positions 307-327 are disordered; sequence PVSEDSTVPQFEAPSPSHSSI. WD repeat units follow at residues 421-460, 470-510, 513-553, 555-595, 599-637, 640-679, and 695-731; these read NGSS…QDAV, TCNS…RSKV, EHEK…SVAS, EAKA…QPIM, GHRK…CLRS, GHIN…TLLT, and EDDT…KVLE. The interval 645-647 is interaction with TRIB1; it reads KNF.

It belongs to the COP1 family. Homodimer. Homodimerization is mediated by the coiled coil domain. Component of the DCX DET1-COP1 ubiquitin ligase complex at least composed of RBX1, DET1, DDB1, CUL4A and COP1. Isoform 2 does not interact with CUL4A but still binds to RBX1, suggesting that the interaction may be mediated by another cullin protein. Isoform 1 and isoform 2 interact with CUL5 but not with CUL1, CUL2 not CUL3. Interacts with bZIP transcription factors JUN, JUNB and JUND but not with FOS, ATF2 nor XBP1. Interacts with p53 (TP53). Interacts with COPS6; this interaction stabilizes RFWD2 through reducing its auto-ubiquitination and decelerating its turnover rate. Interacts with SFN; this interaction leads to SFN degradation. Interacts with p53/TP53 and MTA1. Interacts with TRIB1 (via C-terminus) and TRIB2.

It is found in the nucleus speckle. Its subcellular location is the cytoplasm. It carries out the reaction S-ubiquitinyl-[E2 ubiquitin-conjugating enzyme]-L-cysteine + [acceptor protein]-L-lysine = [E2 ubiquitin-conjugating enzyme]-L-cysteine + N(6)-ubiquitinyl-[acceptor protein]-L-lysine.. It functions in the pathway protein modification; protein ubiquitination. TRIB1 competes with substrates for RFWD2 binding. Its function is as follows. E3 ubiquitin-protein ligase that mediates ubiquitination and subsequent proteasomal degradation of target proteins. E3 ubiquitin ligases accept ubiquitin from an E2 ubiquitin-conjugating enzyme in the form of a thioester and then directly transfers the ubiquitin to targeted substrates. Involved in JUN ubiquitination and degradation. Directly involved in p53 (TP53) ubiquitination and degradation, thereby abolishing p53-dependent transcription and apoptosis. Ubiquitinates p53 independently of MDM2 or RCHY1. Probably mediates E3 ubiquitin ligase activity by functioning as the essential RING domain subunit of larger E3 complexes. In contrast, it does not constitute the catalytic RING subunit in the DCX DET1-COP1 complex that negatively regulates JUN, the ubiquitin ligase activity being mediated by RBX1. Involved in 14-3-3 protein sigma/SFN ubiquitination and proteasomal degradation, leading to AKT activation and promotion of cell survival. Ubiquitinates MTA1 leading to its proteasomal degradation. Upon binding to TRIB1, ubiquitinates CEBPA, which lacks a canonical COP1-binding motif. The polypeptide is E3 ubiquitin-protein ligase COP1 (Mus musculus (Mouse)).